A 216-amino-acid polypeptide reads, in one-letter code: Probable GTP-binding protein EngB (216 aa).

The region spanning 27 to 201 (EGIEVAFAGR…REKLDTWFSE (175 aa)) is the EngB-type G domain. GTP contacts are provided by residues 35–42 (GRSNAGKS), 62–66 (GRTQL), 80–83 (DLPG), 147–150 (TKAD), and 180–182 (FSS). Positions 42 and 64 each coordinate Mg(2+).

Belongs to the TRAFAC class TrmE-Era-EngA-EngB-Septin-like GTPase superfamily. EngB GTPase family. Mg(2+) is required as a cofactor.

Functionally, necessary for normal cell division and for the maintenance of normal septation. The chain is Probable GTP-binding protein EngB from Yersinia pestis bv. Antiqua (strain Angola).